The primary structure comprises 358 residues: Probable arabinan endo-1,5-alpha-L-arabinosidase B (358 aa).

The first 16 residues, 1 to 16 (MVLVATLFSLFTVSLC), serve as a signal peptide directing secretion. Catalysis depends on aspartate 39, which acts as the Proton acceptor. The N-linked (GlcNAc...) asparagine glycan is linked to asparagine 194. The disordered stretch occupies residues 202–227 (HLAKHPKTERVNSQDQNPDPLCRDSS). The active-site Proton donor is the glutamate 233.

The protein belongs to the glycosyl hydrolase 43 family.

It localises to the secreted. It carries out the reaction Endohydrolysis of (1-&gt;5)-alpha-arabinofuranosidic linkages in (1-&gt;5)-arabinans.. The protein operates within glycan metabolism; L-arabinan degradation. Endo-1,5-alpha-L-arabinanase involved in degradation of pectin. Its preferred substrate is linear 1,5-alpha-L-arabinan. The protein is Probable arabinan endo-1,5-alpha-L-arabinosidase B (abnB) of Aspergillus flavus (strain ATCC 200026 / FGSC A1120 / IAM 13836 / NRRL 3357 / JCM 12722 / SRRC 167).